We begin with the raw amino-acid sequence, 346 residues long: tRNA N6-adenosine threonylcarbamoyltransferase (346 aa).

2 residues coordinate Fe cation: H111 and H115. Substrate-binding positions include 134–138, D167, G180, and N277; that span reads LVSGG. D305 is a binding site for Fe cation.

This sequence belongs to the KAE1 / TsaD family. Requires Fe(2+) as cofactor.

The protein localises to the cytoplasm. It carries out the reaction L-threonylcarbamoyladenylate + adenosine(37) in tRNA = N(6)-L-threonylcarbamoyladenosine(37) in tRNA + AMP + H(+). In terms of biological role, required for the formation of a threonylcarbamoyl group on adenosine at position 37 (t(6)A37) in tRNAs that read codons beginning with adenine. Is involved in the transfer of the threonylcarbamoyl moiety of threonylcarbamoyl-AMP (TC-AMP) to the N6 group of A37, together with TsaE and TsaB. TsaD likely plays a direct catalytic role in this reaction. This chain is tRNA N6-adenosine threonylcarbamoyltransferase, found in Bordetella pertussis (strain Tohama I / ATCC BAA-589 / NCTC 13251).